A 233-amino-acid chain; its full sequence is Lipoprotein-releasing system ATP-binding protein LolD (233 aa).

The ABC transporter domain occupies 6 to 233 (LQCDNLCKRY…TAELSLMGAE (228 aa)). Position 42-49 (42-49 (GSSGSGKS)) interacts with ATP.

Belongs to the ABC transporter superfamily. Lipoprotein translocase (TC 3.A.1.125) family. In terms of assembly, the complex is composed of two ATP-binding proteins (LolD) and two transmembrane proteins (LolC and LolE).

It localises to the cell inner membrane. In terms of biological role, part of the ABC transporter complex LolCDE involved in the translocation of mature outer membrane-directed lipoproteins, from the inner membrane to the periplasmic chaperone, LolA. Responsible for the formation of the LolA-lipoprotein complex in an ATP-dependent manner. The sequence is that of Lipoprotein-releasing system ATP-binding protein LolD from Shigella flexneri.